The following is a 425-amino-acid chain: Glutamate-1-semialdehyde 2,1-aminomutase (425 aa).

Lys265 carries the post-translational modification N6-(pyridoxal phosphate)lysine.

The protein belongs to the class-III pyridoxal-phosphate-dependent aminotransferase family. HemL subfamily. Homodimer. It depends on pyridoxal 5'-phosphate as a cofactor.

The protein localises to the cytoplasm. The enzyme catalyses (S)-4-amino-5-oxopentanoate = 5-aminolevulinate. It functions in the pathway porphyrin-containing compound metabolism; protoporphyrin-IX biosynthesis; 5-aminolevulinate from L-glutamyl-tRNA(Glu): step 2/2. The sequence is that of Glutamate-1-semialdehyde 2,1-aminomutase from Thiobacillus denitrificans (strain ATCC 25259 / T1).